Reading from the N-terminus, the 310-residue chain is Fe-S cluster assembly protein dre2 (310 aa).

The N-terminal SAM-like domain stretch occupies residues 1-130 (MSGRTLLLSP…KPDIEDMRAV (130 aa)). Residues 131 to 203 (PLRLGRKKHD…EDLLDGSELA (73 aa)) form a linker region. [2Fe-2S] cluster-binding residues include Cys-212, Cys-223, Cys-226, and Cys-228. A fe-S binding site A region spans residues 212 to 228 (CRPKAGRRRRACKDCTC). [4Fe-4S] cluster is bound by residues Cys-273, Cys-276, Cys-284, and Cys-287. 2 short sequence motifs (cx2C motif) span residues 273-276 (CGNC) and 284-287 (CEGC). A fe-S binding site B region spans residues 273 to 287 (CGNCSLGDAFRCEGC).

This sequence belongs to the anamorsin family. As to quaternary structure, monomer. Interacts with tah18. Interacts with mia40. It depends on [2Fe-2S] cluster as a cofactor. Requires [4Fe-4S] cluster as cofactor.

It is found in the cytoplasm. The protein resides in the mitochondrion intermembrane space. Component of the cytosolic iron-sulfur (Fe-S) protein assembly (CIA) machinery required for the maturation of extramitochondrial Fe-S proteins. Part of an electron transfer chain functioning in an early step of cytosolic Fe-S biogenesis, facilitating the de novo assembly of a [4Fe-4S] cluster on the scaffold complex cfd1-nbp35. Electrons are transferred to dre2 from NADPH via the FAD- and FMN-containing protein tah18. Tah18-dre2 are also required for the assembly of the diferric tyrosyl radical cofactor of ribonucleotide reductase (RNR), probably by providing electrons for reduction during radical cofactor maturation in the catalytic small subunit rnr2. The chain is Fe-S cluster assembly protein dre2 from Aspergillus clavatus (strain ATCC 1007 / CBS 513.65 / DSM 816 / NCTC 3887 / NRRL 1 / QM 1276 / 107).